We begin with the raw amino-acid sequence, 312 residues long: HPr kinase/phosphorylase (312 aa).

Catalysis depends on residues His139 and Lys160. An ATP-binding site is contributed by 154–161; it reads GDSGIGKS. Mg(2+) is bound at residue Ser161. Residue Asp178 is the Proton acceptor; for phosphorylation activity. Proton donor; for dephosphorylation activity of the active site. Residues 202 to 211 form an important for the catalytic mechanism of both phosphorylation and dephosphorylation region; that stretch reads IEIRGVGIID. Mg(2+) is bound at residue Glu203. Arg244 is a catalytic residue. Residues 265–270 form an important for the catalytic mechanism of dephosphorylation region; it reads PVKTGR.

The protein belongs to the HPrK/P family. In terms of assembly, homohexamer. It depends on Mg(2+) as a cofactor.

It catalyses the reaction [HPr protein]-L-serine + ATP = [HPr protein]-O-phospho-L-serine + ADP + H(+). The enzyme catalyses [HPr protein]-O-phospho-L-serine + phosphate + H(+) = [HPr protein]-L-serine + diphosphate. In terms of biological role, catalyzes the ATP- as well as the pyrophosphate-dependent phosphorylation of a specific serine residue in HPr, a phosphocarrier protein of the phosphoenolpyruvate-dependent sugar phosphotransferase system (PTS). HprK/P also catalyzes the pyrophosphate-producing, inorganic phosphate-dependent dephosphorylation (phosphorolysis) of seryl-phosphorylated HPr (P-Ser-HPr). The two antagonistic activities of HprK/P are regulated by several intracellular metabolites, which change their concentration in response to the absence or presence of rapidly metabolisable carbon sources (glucose, fructose, etc.) in the growth medium. Therefore, by controlling the phosphorylation state of HPr, HPrK/P is a sensor enzyme that plays a major role in the regulation of carbon metabolism and sugar transport: it mediates carbon catabolite repression (CCR), and regulates PTS-catalyzed carbohydrate uptake and inducer exclusion. This Streptococcus pneumoniae (strain ATCC BAA-255 / R6) protein is HPr kinase/phosphorylase.